The primary structure comprises 325 residues: tRNA uridine(34) hydroxylase (325 aa).

In terms of domain architecture, Rhodanese spans 122-218 (EENRCLVLDV…YGQAMGTGKW (97 aa)). The active-site Cysteine persulfide intermediate is Cys-178.

Belongs to the TrhO family.

The enzyme catalyses uridine(34) in tRNA + AH2 + O2 = 5-hydroxyuridine(34) in tRNA + A + H2O. Its function is as follows. Catalyzes oxygen-dependent 5-hydroxyuridine (ho5U) modification at position 34 in tRNAs. The sequence is that of tRNA uridine(34) hydroxylase from Chlamydia felis (strain Fe/C-56) (Chlamydophila felis).